The following is a 69-amino-acid chain: MADSEICGKRPVVGRRVTLSGERNRRIFKPNVHKMRVMLPDGTVKRMYVCTKCLKAGKVMKAPRIPKEG.

This sequence belongs to the bacterial ribosomal protein bL28 family.

The sequence is that of Large ribosomal subunit protein bL28 from Aquifex aeolicus (strain VF5).